The primary structure comprises 550 residues: Arginine--tRNA ligase (550 aa).

Positions 130–140 (ANPTGPIHLGG) match the 'HIGH' region motif.

Belongs to the class-I aminoacyl-tRNA synthetase family. As to quaternary structure, monomer.

The protein localises to the cytoplasm. The catalysed reaction is tRNA(Arg) + L-arginine + ATP = L-arginyl-tRNA(Arg) + AMP + diphosphate. The sequence is that of Arginine--tRNA ligase from Rhodococcus opacus (strain B4).